A 195-amino-acid chain; its full sequence is Probable chemoreceptor glutamine deamidase CheD 2 (195 aa).

This sequence belongs to the CheD family.

The catalysed reaction is L-glutaminyl-[protein] + H2O = L-glutamyl-[protein] + NH4(+). Probably deamidates glutamine residues to glutamate on methyl-accepting chemotaxis receptors (MCPs), playing an important role in chemotaxis. This is Probable chemoreceptor glutamine deamidase CheD 2 from Burkholderia thailandensis (strain ATCC 700388 / DSM 13276 / CCUG 48851 / CIP 106301 / E264).